The primary structure comprises 170 residues: MPRSQRNDNFIDKTFTVIADILLKVLPTSQREKQAFTYYRDGMSAQAEGEYAEALQNYYEAMRLEVDAYDRSYILYNIGLIHTSNGEHGRALEYYYQALERNPSLPSALNNIAVIYHYRGEQAIENGQSEISQILFEKAADYWKEAIRLAPTNYIEAQNWLKMTGRNTGL.

TPR repeat units lie at residues 35–68 (AFTY…EVDA), 72–105 (SYIL…NPSL), and 120–153 (GEQA…APTN).

Belongs to the Ycf3 family.

The protein localises to the plastid. It localises to the chloroplast thylakoid membrane. In terms of biological role, essential for the assembly of the photosystem I (PSI) complex. May act as a chaperone-like factor to guide the assembly of the PSI subunits. The chain is Photosystem I assembly protein Ycf3 from Tetradesmus obliquus (Green alga).